The sequence spans 549 residues: Cation/acetate symporter ActP (549 aa).

13 consecutive transmembrane segments (helical) span residues 33-53 (WQAI…TYWA), 77-97 (LAIA…ALVF), 103-123 (GLIY…LIAE), 148-168 (ILSA…QMVG), 183-203 (IAVV…GMLA), 206-226 (WVQI…AFMV), 262-282 (ISAL…PHIL), 303-323 (GFMG…IMLV), 355-375 (LFLG…VAGL), 404-424 (VSKI…VLFE), 428-448 (IAFM…PIIL), 464-484 (GGWL…TIWV), and 493-513 (IFPY…GIWF).

This sequence belongs to the sodium:solute symporter (SSF) (TC 2.A.21) family.

It localises to the cell inner membrane. Functionally, transports acetate. This Escherichia fergusonii (strain ATCC 35469 / DSM 13698 / CCUG 18766 / IAM 14443 / JCM 21226 / LMG 7866 / NBRC 102419 / NCTC 12128 / CDC 0568-73) protein is Cation/acetate symporter ActP.